We begin with the raw amino-acid sequence, 227 residues long: MAYPFQLGLQDATSPIMEELLHFHDHTLMIVFLISSLVLYIISLMLTTKLTHTSTMDAQEVETVWTILPAIILILIALPSLRILYMMDEINNPSLTVKTMGHQWYWSYEYTDYEDLNFDSYMIPTQELKPGELRLLEVDNRVVLPMEMTIRMLISSEDVLHSWAVPSLGLKTDAIPGRLNQTTLMAMRPGLYYGQCSEICGSNHSFMPIVLEMVPLSYFETWSALMV.

Residues 1–14 (MAYPFQLGLQDATS) are Mitochondrial intermembrane-facing. Residues 15–45 (PIMEELLHFHDHTLMIVFLISSLVLYIISLM) form a helical membrane-spanning segment. Residues 46–59 (LTTKLTHTSTMDAQ) lie on the Mitochondrial matrix side of the membrane. The chain crosses the membrane as a helical span at residues 60-87 (EVETVWTILPAIILILIALPSLRILYMM). Over 88–227 (DEINNPSLTV…YFETWSALMV (140 aa)) the chain is Mitochondrial intermembrane. Cu cation contacts are provided by His161, Cys196, Glu198, Cys200, His204, and Met207. Glu198 lines the Mg(2+) pocket. Tyr218 bears the Phosphotyrosine mark.

Belongs to the cytochrome c oxidase subunit 2 family. As to quaternary structure, component of the cytochrome c oxidase (complex IV, CIV), a multisubunit enzyme composed of 14 subunits. The complex is composed of a catalytic core of 3 subunits MT-CO1, MT-CO2 and MT-CO3, encoded in the mitochondrial DNA, and 11 supernumerary subunits COX4I, COX5A, COX5B, COX6A, COX6B, COX6C, COX7A, COX7B, COX7C, COX8 and NDUFA4, which are encoded in the nuclear genome. The complex exists as a monomer or a dimer and forms supercomplexes (SCs) in the inner mitochondrial membrane with NADH-ubiquinone oxidoreductase (complex I, CI) and ubiquinol-cytochrome c oxidoreductase (cytochrome b-c1 complex, complex III, CIII), resulting in different assemblies (supercomplex SCI(1)III(2)IV(1) and megacomplex MCI(2)III(2)IV(2)). Found in a complex with TMEM177, COA6, COX18, COX20, SCO1 and SCO2. Interacts with TMEM177 in a COX20-dependent manner. Interacts with COX20. Interacts with COX16. Cu cation is required as a cofactor.

It localises to the mitochondrion inner membrane. It catalyses the reaction 4 Fe(II)-[cytochrome c] + O2 + 8 H(+)(in) = 4 Fe(III)-[cytochrome c] + 2 H2O + 4 H(+)(out). Component of the cytochrome c oxidase, the last enzyme in the mitochondrial electron transport chain which drives oxidative phosphorylation. The respiratory chain contains 3 multisubunit complexes succinate dehydrogenase (complex II, CII), ubiquinol-cytochrome c oxidoreductase (cytochrome b-c1 complex, complex III, CIII) and cytochrome c oxidase (complex IV, CIV), that cooperate to transfer electrons derived from NADH and succinate to molecular oxygen, creating an electrochemical gradient over the inner membrane that drives transmembrane transport and the ATP synthase. Cytochrome c oxidase is the component of the respiratory chain that catalyzes the reduction of oxygen to water. Electrons originating from reduced cytochrome c in the intermembrane space (IMS) are transferred via the dinuclear copper A center (CU(A)) of subunit 2 and heme A of subunit 1 to the active site in subunit 1, a binuclear center (BNC) formed by heme A3 and copper B (CU(B)). The BNC reduces molecular oxygen to 2 water molecules using 4 electrons from cytochrome c in the IMS and 4 protons from the mitochondrial matrix. This Canis lupus familiaris (Dog) protein is Cytochrome c oxidase subunit 2 (MT-CO2).